Reading from the N-terminus, the 135-residue chain is Probable histone H2A.8 (135 aa).

Belongs to the histone H2A family. The nucleosome is a histone octamer containing two molecules each of H2A, H2B, H3 and H4 assembled in one H3-H4 heterotetramer and two H2A-H2B heterodimers. The octamer wraps approximately 147 bp of DNA.

The protein resides in the nucleus. It is found in the chromosome. Core component of nucleosome. Nucleosomes wrap and compact DNA into chromatin, limiting DNA accessibility to the cellular machineries which require DNA as a template. Histones thereby play a central role in transcription regulation, DNA repair, DNA replication and chromosomal stability. DNA accessibility is regulated via a complex set of post-translational modifications of histones, also called histone code, and nucleosome remodeling. The chain is Probable histone H2A.8 from Oryza sativa subsp. indica (Rice).